Reading from the N-terminus, the 76-residue chain is Conopeptide X11.1 (76 aa).

An N-terminal signal peptide occupies residues 1 to 20 (MMKLSVSFLLLLMLLPFITG). Positions 21–39 (EENSDSDVLKSGAAVRQGR) are excised as a propeptide. Disulfide bonds link cysteine 42/cysteine 56, cysteine 49/cysteine 61, cysteine 55/cysteine 66, and cysteine 60/cysteine 73.

Expressed by the venom duct.

It localises to the secreted. Its function is as follows. Antimicrobial peptide that potently inhibits growth of Mycobacterium tuberculosis (H37Rv strain) (MIC=3 uM). The chain is Conopeptide X11.1 from Conasprella ximenes (Interrupted cone).